Reading from the N-terminus, the 291-residue chain is N-acetylmannosamine kinase (291 aa).

Residues 5 to 12 (AIDIGGTK) and 132 to 139 (GVGGGVVS) contribute to the ATP site. The Zn(2+) site is built by histidine 156, cysteine 166, cysteine 168, and cysteine 173.

It belongs to the ROK (NagC/XylR) family. NanK subfamily. Homodimer.

The enzyme catalyses an N-acyl-D-mannosamine + ATP = an N-acyl-D-mannosamine 6-phosphate + ADP + H(+). The protein operates within amino-sugar metabolism; N-acetylneuraminate degradation; D-fructose 6-phosphate from N-acetylneuraminate: step 2/5. Functionally, catalyzes the phosphorylation of N-acetylmannosamine (ManNAc) to ManNAc-6-P. The sequence is that of N-acetylmannosamine kinase from Escherichia coli O7:K1 (strain IAI39 / ExPEC).